The following is a 350-amino-acid chain: Serine-threonine kinase receptor-associated protein (350 aa).

7 WD repeats span residues 12–56 (GHTR…GTFL), 57–96 (GHKG…ELIT), 98–137 (AHKH…AEPD), 141–179 (GHTS…EVKA), 180–212 (LNVA…HSAE), 221–262 (EAPA…ESYK), and 263–302 (GHFG…TYGL). The interval 311-350 (ENAEAAKARTTLPGTAEEEIEEVASENSDSVYSSTPEVKA) is disordered. Residues 335–350 (SENSDSVYSSTPEVKA) show a composition bias toward polar residues.

The protein belongs to the WD repeat STRAP family. As to quaternary structure, part of the core SMN complex.

It localises to the cytoplasm. It is found in the nucleus. In terms of biological role, the SMN complex catalyzes the assembly of small nuclear ribonucleoproteins (snRNPs), the building blocks of the spliceosome, and thereby plays an important role in the splicing of cellular pre-mRNAs. Most spliceosomal snRNPs contain a common set of Sm proteins SNRPB, SNRPD1, SNRPD2, SNRPD3, SNRPE, SNRPF and SNRPG that assemble in a heptameric protein ring on the Sm site of the small nuclear RNA to form the core snRNP (Sm core). In the cytosol, the Sm proteins SNRPD1, SNRPD2, SNRPE, SNRPF and SNRPG are trapped in an inactive 6S pICln-Sm complex by the chaperone CLNS1A that controls the assembly of the core snRNP. To assemble core snRNPs, the SMN complex accepts the trapped 5Sm proteins from CLNS1A forming an intermediate. Binding of snRNA inside 5Sm triggers eviction of the SMN complex, thereby allowing binding of SNRPD3 and SNRPB to complete assembly of the core snRNP. STRAP plays a role in the cellular distribution of the SMN complex. This is Serine-threonine kinase receptor-associated protein (STRAP) from Gallus gallus (Chicken).